Here is an 87-residue protein sequence, read N- to C-terminus: Small ribosomal subunit protein bS20 (87 aa).

The protein belongs to the bacterial ribosomal protein bS20 family.

Binds directly to 16S ribosomal RNA. The sequence is that of Small ribosomal subunit protein bS20 from Shigella flexneri.